The primary structure comprises 1076 residues: Zinc-regulated protein 8 (1076 aa).

A compositionally biased stretch (basic residues) spans 1 to 11 (MRSFIKAHKKS). Disordered stretches follow at residues 1 to 66 (MRSF…PGFE), 85 to 162 (SNLN…RTTD), 190 to 223 (PASP…TSPS), and 234 to 253 (KNKG…SSKK). Over residues 23–34 (NFSGNTNNSSQR) the composition is skewed to polar residues. A compositionally biased stretch (low complexity) spans 93–106 (STPTTSTNQTTSNS). The span at 107-117 (FVLQNPPTKNT) shows a compositional bias: polar residues. The segment covering 118-128 (GPPPPLPPPLF) has biased composition (pro residues). 2 stretches are compositionally biased toward polar residues: residues 193–206 (PASN…SKQF) and 214–223 (ENLTSTTSPS). Residues serine 275 and serine 354 each carry the phosphoserine modification. Disordered stretches follow at residues 357–450 (IRHG…DDES), 534–557 (LSDD…ESDN), and 566–585 (GKET…SLGE). Positions 362–378 (LQSSPSKVNKNDSQNET) are enriched in polar residues. 2 positions are modified to phosphoserine: serine 403 and serine 407. The span at 408-418 (VNEKETHKAND) shows a compositional bias: basic and acidic residues. The segment covering 419-450 (CNDESSENGDGDNDHDDDYDDDDDDDDDDDES) has biased composition (acidic residues). A compositionally biased stretch (basic and acidic residues) spans 576 to 585 (GHHDDASLGE). A phosphoserine mark is found at serine 632 and serine 676. Disordered stretches follow at residues 658 to 701 (NIIR…KPTV), 713 to 762 (SASD…PHSQ), 909 to 931 (RRTL…FSSV), 1000 to 1020 (HNVG…QISN), and 1042 to 1076 (PTNS…PKRA). 2 stretches are compositionally biased toward polar residues: residues 690-701 (LTGTTGSTKPTV) and 739-748 (QVSLQSSLYE).

It belongs to the ZRG8 family. As to quaternary structure, interacts with BUD27, GIS1 and SSD1.

It is found in the cytoplasm. The protein localises to the bud. It localises to the bud neck. The protein resides in the bud tip. Its function is as follows. Involved in the integrity functions of RAM, a conserved signaling network that regulates maintenance of polarized growth and daughter-cell-specific transcription. In Saccharomyces cerevisiae (strain ATCC 204508 / S288c) (Baker's yeast), this protein is Zinc-regulated protein 8 (ZRG8).